The primary structure comprises 721 residues: Fatty acid oxidation complex subunit alpha (721 aa).

An enoyl-CoA hydratase/isomerase region spans residues 1-190; the sequence is MIYEGKAITV…KVGVVDAIVA (190 aa). Aspartate 297 serves as a coordination point for substrate. The interval 312 to 721 is 3-hydroxyacyl-CoA dehydrogenase; that stretch reads RDVKQAAVLG…SFFGQASSEV (410 aa). Residues methionine 325, aspartate 344, 401 to 403, lysine 408, and serine 430 contribute to the NAD(+) site; that span reads VVE. Residue histidine 451 is the For 3-hydroxyacyl-CoA dehydrogenase activity of the active site. Asparagine 454 contributes to the NAD(+) binding site. Residues asparagine 501 and tyrosine 660 each contribute to the substrate site.

This sequence in the N-terminal section; belongs to the enoyl-CoA hydratase/isomerase family. It in the C-terminal section; belongs to the 3-hydroxyacyl-CoA dehydrogenase family. In terms of assembly, heterotetramer of two alpha chains (FadB) and two beta chains (FadA).

It catalyses the reaction a (3S)-3-hydroxyacyl-CoA + NAD(+) = a 3-oxoacyl-CoA + NADH + H(+). The catalysed reaction is a (3S)-3-hydroxyacyl-CoA = a (2E)-enoyl-CoA + H2O. It carries out the reaction a 4-saturated-(3S)-3-hydroxyacyl-CoA = a (3E)-enoyl-CoA + H2O. The enzyme catalyses (3S)-3-hydroxybutanoyl-CoA = (3R)-3-hydroxybutanoyl-CoA. It catalyses the reaction a (3Z)-enoyl-CoA = a 4-saturated (2E)-enoyl-CoA. The catalysed reaction is a (3E)-enoyl-CoA = a 4-saturated (2E)-enoyl-CoA. Its pathway is lipid metabolism; fatty acid beta-oxidation. Functionally, involved in the aerobic and anaerobic degradation of long-chain fatty acids via beta-oxidation cycle. Catalyzes the formation of 3-oxoacyl-CoA from enoyl-CoA via L-3-hydroxyacyl-CoA. It can also use D-3-hydroxyacyl-CoA and cis-3-enoyl-CoA as substrate. This Pseudomonas syringae pv. tomato (strain ATCC BAA-871 / DC3000) protein is Fatty acid oxidation complex subunit alpha.